Here is a 572-residue protein sequence, read N- to C-terminus: Pentatricopeptide repeat-containing protein At5g15010, mitochondrial (572 aa).

The transit peptide at 1–57 directs the protein to the mitochondrion; sequence MRGIFLIRSRLSIFRAPAVKCLRFSNVLPSLSNNCIVRLYMEPPVACVLPLGLCSMF. PPR repeat units lie at residues 160–194, 196–230, 231–261, 265–300, 301–335, 336–371, 372–406, 412–438, 439–473, and 474–508; these read SVRE…SPSL, NSQT…KLEM, GIDD…NKDK, DAKS…GVKH, DVVS…CIEP, DRKV…GIEP, NVVT…GLFP, HAFM…GCEP, TVET…TVGP, and DLSS…GMRP.

This sequence belongs to the PPR family. P subfamily.

It localises to the mitochondrion. The sequence is that of Pentatricopeptide repeat-containing protein At5g15010, mitochondrial from Arabidopsis thaliana (Mouse-ear cress).